Consider the following 58-residue polypeptide: UPF0434 protein NT01EI_2448 (58 aa).

It belongs to the UPF0434 family.

This is UPF0434 protein NT01EI_2448 from Edwardsiella ictaluri (strain 93-146).